A 478-amino-acid polypeptide reads, in one-letter code: Protein WVD2-like 7 (478 aa).

2 disordered regions span residues 201 to 326 (DSAL…TGST) and 385 to 420 (PMPS…SASI). The span at 208-217 (AGSKLDEHAS) shows a compositional bias: basic and acidic residues. Composition is skewed to polar residues over residues 219–232 (KPSN…SSVN) and 264–277 (GSSL…NVDA). The segment covering 278–289 (KSQKELRPKKTI) has biased composition (basic and acidic residues). Composition is skewed to polar residues over residues 309–326 (RCKT…TGST) and 407–420 (VAQS…SASI).

Belongs to the TPX2 family. In terms of tissue distribution, expressed in seedlings.

The protein localises to the cytoplasm. It localises to the cytoskeleton. Microtubule-associated protein (MAP) that regulates the orientation of interphase cortical microtubules. In Arabidopsis thaliana (Mouse-ear cress), this protein is Protein WVD2-like 7.